Reading from the N-terminus, the 214-residue chain is dITP/XTP pyrophosphatase (214 aa).

13–18 (SHNKGK) contributes to the substrate binding site. The Mg(2+) site is built by Glu45 and Asp74. The active-site Proton acceptor is the Asp74. Residues Ser75, 163–166 (FGYD), Lys186, and 199–200 (HR) each bind substrate.

The protein belongs to the HAM1 NTPase family. As to quaternary structure, homodimer. The cofactor is Mg(2+).

The enzyme catalyses XTP + H2O = XMP + diphosphate + H(+). The catalysed reaction is dITP + H2O = dIMP + diphosphate + H(+). It carries out the reaction ITP + H2O = IMP + diphosphate + H(+). Functionally, pyrophosphatase that catalyzes the hydrolysis of nucleoside triphosphates to their monophosphate derivatives, with a high preference for the non-canonical purine nucleotides XTP (xanthosine triphosphate), dITP (deoxyinosine triphosphate) and ITP. Seems to function as a house-cleaning enzyme that removes non-canonical purine nucleotides from the nucleotide pool, thus preventing their incorporation into DNA/RNA and avoiding chromosomal lesions. The polypeptide is dITP/XTP pyrophosphatase (Agrobacterium fabrum (strain C58 / ATCC 33970) (Agrobacterium tumefaciens (strain C58))).